Here is a 163-residue protein sequence, read N- to C-terminus: Cytochrome c-type biogenesis protein CcmE (163 aa).

The Cytoplasmic segment spans residues 1-8; the sequence is MNPRRKKR. A helical; Signal-anchor for type II membrane protein membrane pass occupies residues 9 to 29; that stretch reads LTIILAISAGLAAVIGLVLYA. Over 30–163 the chain is Periplasmic; that stretch reads LSQNIDLFYT…TEAQLKGSKQ (134 aa). Histidine 131 and tyrosine 135 together coordinate heme.

The protein belongs to the CcmE/CycJ family.

Its subcellular location is the cell inner membrane. Functionally, heme chaperone required for the biogenesis of c-type cytochromes. Transiently binds heme delivered by CcmC and transfers the heme to apo-cytochromes in a process facilitated by CcmF and CcmH. This Aeromonas hydrophila subsp. hydrophila (strain ATCC 7966 / DSM 30187 / BCRC 13018 / CCUG 14551 / JCM 1027 / KCTC 2358 / NCIMB 9240 / NCTC 8049) protein is Cytochrome c-type biogenesis protein CcmE.